A 222-amino-acid chain; its full sequence is Small ribosomal subunit protein uS3 (222 aa).

The region spanning 39-107 (IRKYIKTKFY…QININIAEIK (69 aa)) is the KH type-2 domain.

Belongs to the universal ribosomal protein uS3 family. Part of the 30S ribosomal subunit. Forms a tight complex with proteins S10 and S14.

In terms of biological role, binds the lower part of the 30S subunit head. Binds mRNA in the 70S ribosome, positioning it for translation. This is Small ribosomal subunit protein uS3 from Carboxydothermus hydrogenoformans (strain ATCC BAA-161 / DSM 6008 / Z-2901).